Here is a 352-residue protein sequence, read N- to C-terminus: Light dependent period A (352 aa).

4Fe-4S ferredoxin-type domains lie at 88 to 119 (RRAW…STGV) and 121 to 144 (RDRC…AQAW). The [4Fe-4S] cluster site is built by Cys97, Cys101, Cys105, Cys109, Cys124, Cys127, Cys130, and Cys134.

Interacts with KaiA, CikA and SasA; the complexes do not follow circadian rhythms. [4Fe-4S] cluster serves as cofactor.

Functionally, functions in an input pathway to the Kai circadian clock. Probably senses the metabolic state of the cell via plastoquinone levels and informs the clock to modulate the photoperiod length. Deletion decreases the ability of the bacteria to modulate the circadian period in response to altered light regimes. Mild overexpression increases the photoperiod. Rapidly degraded in the presence of the quinone analog DBMIB (2,5-dibromo-3-methyl-6-isopropyl-p-benzoquinone), an artifical electron acceptor for photosystem II that reduces the plastoquinone pool. Partially resonsible for sensitivity of CikA to DBMIB, influences the levels of KaiA. In Synechococcus elongatus (strain ATCC 33912 / PCC 7942 / FACHB-805) (Anacystis nidulans R2), this protein is Light dependent period A.